A 340-amino-acid chain; its full sequence is S-adenosylmethionine:tRNA ribosyltransferase-isomerase (340 aa).

This sequence belongs to the QueA family. As to quaternary structure, monomer.

The protein resides in the cytoplasm. The catalysed reaction is 7-aminomethyl-7-carbaguanosine(34) in tRNA + S-adenosyl-L-methionine = epoxyqueuosine(34) in tRNA + adenine + L-methionine + 2 H(+). Its pathway is tRNA modification; tRNA-queuosine biosynthesis. Its function is as follows. Transfers and isomerizes the ribose moiety from AdoMet to the 7-aminomethyl group of 7-deazaguanine (preQ1-tRNA) to give epoxyqueuosine (oQ-tRNA). In Chlorobaculum parvum (strain DSM 263 / NCIMB 8327) (Chlorobium vibrioforme subsp. thiosulfatophilum), this protein is S-adenosylmethionine:tRNA ribosyltransferase-isomerase.